The following is a 338-amino-acid chain: UDP-glucose 4-epimerase (338 aa).

Residues 11–12 (YI), 31–36 (DNLCNS), 58–59 (DI), 80–84 (FAGLK), Asn-99, Ser-124, Tyr-149, Lys-153, and Phe-178 each bind NAD(+). The substrate site is built by Ser-124 and Tyr-149. Tyr-149 (proton acceptor) is an active-site residue. Substrate contacts are provided by residues Asn-179, 199–200 (NL), 216–218 (AVF), Arg-231, 292–295 (RDGD), and Tyr-299.

It belongs to the NAD(P)-dependent epimerase/dehydratase family. As to quaternary structure, homodimer. NAD(+) serves as cofactor.

It carries out the reaction UDP-alpha-D-glucose = UDP-alpha-D-galactose. Its pathway is carbohydrate metabolism; galactose metabolism. Involved in the metabolism of galactose. Catalyzes the conversion of UDP-galactose (UDP-Gal) to UDP-glucose (UDP-Glc) through a mechanism involving the transient reduction of NAD. The protein is UDP-glucose 4-epimerase (galE) of Salmonella typhi.